The primary structure comprises 344 residues: Exopolyphosphatase 1 (344 aa).

A disordered region spans residues 319–344 (VHTSVRAVGGQPADRNAANRSRGSKP).

This sequence belongs to the GppA/Ppx family. Homodimer.

The enzyme catalyses [phosphate](n) + H2O = [phosphate](n-1) + phosphate + H(+). In terms of biological role, degradation of inorganic polyphosphates (polyP). Releases orthophosphate processively from the ends of the polyP chain. In Mycobacterium bovis (strain ATCC BAA-935 / AF2122/97), this protein is Exopolyphosphatase 1.